Consider the following 123-residue polypeptide: Large ribosomal subunit protein bL12 (123 aa).

Belongs to the bacterial ribosomal protein bL12 family. Homodimer. Part of the ribosomal stalk of the 50S ribosomal subunit. Forms a multimeric L10(L12)X complex, where L10 forms an elongated spine to which 2 to 4 L12 dimers bind in a sequential fashion. Binds GTP-bound translation factors.

Functionally, forms part of the ribosomal stalk which helps the ribosome interact with GTP-bound translation factors. Is thus essential for accurate translation. The protein is Large ribosomal subunit protein bL12 of Mycoplasmopsis synoviae (strain 53) (Mycoplasma synoviae).